We begin with the raw amino-acid sequence, 1207 residues long: DNA-directed RNA polymerase subunit beta' (1207 aa).

4 residues coordinate Zn(2+): Cys60, Cys62, Cys75, and Cys78. Residues Asp449, Asp451, and Asp453 each coordinate Mg(2+). Positions 822, 896, 903, and 906 each coordinate Zn(2+).

Belongs to the RNA polymerase beta' chain family. The RNAP catalytic core consists of 2 alpha, 1 beta, 1 beta' and 1 omega subunit. When a sigma factor is associated with the core the holoenzyme is formed, which can initiate transcription. Requires Mg(2+) as cofactor. Zn(2+) serves as cofactor.

It catalyses the reaction RNA(n) + a ribonucleoside 5'-triphosphate = RNA(n+1) + diphosphate. Functionally, DNA-dependent RNA polymerase catalyzes the transcription of DNA into RNA using the four ribonucleoside triphosphates as substrates. In Staphylococcus aureus (strain MRSA252), this protein is DNA-directed RNA polymerase subunit beta'.